Consider the following 448-residue polypeptide: CCA-adding enzyme (448 aa).

ATP is bound by residues S52 and K55. 2 residues coordinate CTP: S52 and K55. 3 residues coordinate Mg(2+): D64, D66, and D118. Positions 141, 160, and 169 each coordinate ATP. The CTP site is built by H141, K160, and Y169.

It belongs to the tRNA nucleotidyltransferase/poly(A) polymerase family. Archaeal CCA-adding enzyme subfamily. Homodimer. Requires Mg(2+) as cofactor.

It catalyses the reaction a tRNA precursor + 2 CTP + ATP = a tRNA with a 3' CCA end + 3 diphosphate. The catalysed reaction is a tRNA with a 3' CCA end + 2 CTP + ATP = a tRNA with a 3' CCACCA end + 3 diphosphate. In terms of biological role, catalyzes the addition and repair of the essential 3'-terminal CCA sequence in tRNAs without using a nucleic acid template. Adds these three nucleotides in the order of C, C, and A to the tRNA nucleotide-73, using CTP and ATP as substrates and producing inorganic pyrophosphate. tRNA 3'-terminal CCA addition is required both for tRNA processing and repair. Also involved in tRNA surveillance by mediating tandem CCA addition to generate a CCACCA at the 3' terminus of unstable tRNAs. While stable tRNAs receive only 3'-terminal CCA, unstable tRNAs are marked with CCACCA and rapidly degraded. The polypeptide is CCA-adding enzyme (Pyrococcus abyssi (strain GE5 / Orsay)).